Consider the following 204-residue polypeptide: CDP-archaeol synthase (204 aa).

A run of 6 helical transmembrane segments spans residues 5–25 (VYAC…YVIL), 43–63 (MLWV…SRLV), 91–111 (FEGF…LAYA), 116–136 (GVSA…GAFV), 147–167 (PAIL…QGLF), and 175–195 (VVVA…MAAF).

Belongs to the CDP-archaeol synthase family. It depends on Mg(2+) as a cofactor.

It is found in the cell membrane. The catalysed reaction is 2,3-bis-O-(geranylgeranyl)-sn-glycerol 1-phosphate + CTP + H(+) = CDP-2,3-bis-O-(geranylgeranyl)-sn-glycerol + diphosphate. Its pathway is membrane lipid metabolism; glycerophospholipid metabolism. Its function is as follows. Catalyzes the formation of CDP-2,3-bis-(O-geranylgeranyl)-sn-glycerol (CDP-archaeol) from 2,3-bis-(O-geranylgeranyl)-sn-glycerol 1-phosphate (DGGGP) and CTP. This reaction is the third ether-bond-formation step in the biosynthesis of archaeal membrane lipids. This chain is CDP-archaeol synthase, found in Thermofilum pendens (strain DSM 2475 / Hrk 5).